The chain runs to 314 residues: Putative S-adenosyl-L-methionine-dependent methyltransferase MAP_4191c (314 aa).

S-adenosyl-L-methionine-binding positions include aspartate 138 and 167–168; that span reads DL.

The protein belongs to the UPF0677 family.

In terms of biological role, exhibits S-adenosyl-L-methionine-dependent methyltransferase activity. In Mycolicibacterium paratuberculosis (strain ATCC BAA-968 / K-10) (Mycobacterium paratuberculosis), this protein is Putative S-adenosyl-L-methionine-dependent methyltransferase MAP_4191c.